We begin with the raw amino-acid sequence, 543 residues long: Chaperonin GroEL 1 (543 aa).

ATP contacts are provided by residues 30-33 (TLGP), Lys-51, 87-91 (DGTTT), Gly-415, and Asp-496.

It belongs to the chaperonin (HSP60) family. In terms of assembly, forms a cylinder of 14 subunits composed of two heptameric rings stacked back-to-back. Interacts with the co-chaperonin GroES.

The protein localises to the cytoplasm. It catalyses the reaction ATP + H2O + a folded polypeptide = ADP + phosphate + an unfolded polypeptide.. Together with its co-chaperonin GroES, plays an essential role in assisting protein folding. The GroEL-GroES system forms a nano-cage that allows encapsulation of the non-native substrate proteins and provides a physical environment optimized to promote and accelerate protein folding. This is Chaperonin GroEL 1 from Mesorhizobium japonicum (strain LMG 29417 / CECT 9101 / MAFF 303099) (Mesorhizobium loti (strain MAFF 303099)).